The primary structure comprises 417 residues: MAEYKNYTLNFGPVHPAAHGVLRLILELDGETVVRADPHVGLLHRGTEKLAEFKPYNQSIGYMDRLDYVSMMCNEHAYVMAIEKLLELEVPERAQYIRVMFAEMTRILNHLLWVAACGIDLGAMTVFLYAFRVREDLFDCYEAVSGARMHAAYFRPGGVARDLPTQMPQYKQTRFTSKRKTKKINANRQGSMLDFLDSFVVDFDKSLDEIDTLLTDNRLWKQRTVDIGVVTAERAVELGFTGPMLRGSGVAWDLRKSQPYEVYDKLDFDIPVGANGDCYDRYLVRMAEMRESNKLIKQCVDWLRANQGPVLSDNHKVAPPKRNAMKNNMEELIHHFKLFSEGYCTPEGEVYVGTEHPKGEFGVYIKSDGANKPYRLKMKAPGFTHISAMDELLSGHMLADTPAIISTIDVVFGDVDR.

It belongs to the complex I 49 kDa subunit family. In terms of assembly, NDH-1 is composed of 14 different subunits. Subunits NuoB, C, D, E, F, and G constitute the peripheral sector of the complex.

It localises to the cell inner membrane. It catalyses the reaction a quinone + NADH + 5 H(+)(in) = a quinol + NAD(+) + 4 H(+)(out). NDH-1 shuttles electrons from NADH, via FMN and iron-sulfur (Fe-S) centers, to quinones in the respiratory chain. The immediate electron acceptor for the enzyme in this species is believed to be ubiquinone. Couples the redox reaction to proton translocation (for every two electrons transferred, four hydrogen ions are translocated across the cytoplasmic membrane), and thus conserves the redox energy in a proton gradient. This is NADH-quinone oxidoreductase subunit D from Francisella philomiragia subsp. philomiragia (strain ATCC 25017 / CCUG 19701 / FSC 153 / O#319-036).